The following is a 191-amino-acid chain: Peptidyl-tRNA hydrolase (191 aa).

Y17 is a tRNA binding site. Catalysis depends on H22, which acts as the Proton acceptor. Positions 68, 70, and 116 each coordinate tRNA.

It belongs to the PTH family. In terms of assembly, monomer.

It is found in the cytoplasm. The enzyme catalyses an N-acyl-L-alpha-aminoacyl-tRNA + H2O = an N-acyl-L-amino acid + a tRNA + H(+). In terms of biological role, hydrolyzes ribosome-free peptidyl-tRNAs (with 1 or more amino acids incorporated), which drop off the ribosome during protein synthesis, or as a result of ribosome stalling. Catalyzes the release of premature peptidyl moieties from peptidyl-tRNA molecules trapped in stalled 50S ribosomal subunits, and thus maintains levels of free tRNAs and 50S ribosomes. The polypeptide is Peptidyl-tRNA hydrolase (Mycobacterium tuberculosis (strain ATCC 25177 / H37Ra)).